Here is a 202-residue protein sequence, read N- to C-terminus: MNILHLDSSILGDHSASRQLSRDVVEAYKSTHADSHVTYRDLASEALGHFSAASLAAAGTPVEARDAAQQQEVDNNEATLQQFLDADVLVIGAPMYNFSIPSQLKAWIDRIAVAGRTFRYSEAGPEGLCGGKKVIIVSTSGGLHQGLPTGAGHEELLKALFAFIGITDLQFVRAHGLAYGEEPRANAMAAAKQQIESELLAA.

Residues S9, 15–17 (SAS), 95–98 (MYNF), and 139–142 (TSGG) contribute to the FMN site.

This sequence belongs to the azoreductase type 1 family. As to quaternary structure, homodimer. The cofactor is FMN.

It carries out the reaction 2 a quinone + NADH + H(+) = 2 a 1,4-benzosemiquinone + NAD(+). The catalysed reaction is N,N-dimethyl-1,4-phenylenediamine + anthranilate + 2 NAD(+) = 2-(4-dimethylaminophenyl)diazenylbenzoate + 2 NADH + 2 H(+). Functionally, quinone reductase that provides resistance to thiol-specific stress caused by electrophilic quinones. Its function is as follows. Also exhibits azoreductase activity. Catalyzes the reductive cleavage of the azo bond in aromatic azo compounds to the corresponding amines. The sequence is that of FMN-dependent NADH:quinone oxidoreductase 1 from Pseudomonas syringae pv. tomato (strain ATCC BAA-871 / DC3000).